We begin with the raw amino-acid sequence, 324 residues long: Adenine deaminase (324 aa).

Zn(2+)-binding residues include H11, H13, and H189. E192 acts as the Proton donor in catalysis. D270 provides a ligand contact to Zn(2+). D271 provides a ligand contact to substrate.

Belongs to the metallo-dependent hydrolases superfamily. Adenosine and AMP deaminases family. Adenine deaminase type 2 subfamily. Zn(2+) serves as cofactor.

It catalyses the reaction adenine + H2O + H(+) = hypoxanthine + NH4(+). Functionally, catalyzes the hydrolytic deamination of adenine to hypoxanthine. Plays an important role in the purine salvage pathway and in nitrogen catabolism. The sequence is that of Adenine deaminase from Sinorhizobium medicae (strain WSM419) (Ensifer medicae).